Reading from the N-terminus, the 657-residue chain is Glycogen debranching enzyme (657 aa).

Asp336 acts as the Nucleophile in catalysis. The Proton donor role is filled by Glu371. The disordered stretch occupies residues 460–479 (ANGEENRDGTNNNYSNNHGK).

The protein belongs to the glycosyl hydrolase 13 family.

The catalysed reaction is Hydrolysis of (1-&gt;6)-alpha-D-glucosidic linkages to branches with degrees of polymerization of three or four glucose residues in limit dextrin.. The protein operates within glycan degradation; glycogen degradation. Removes maltotriose and maltotetraose chains that are attached by 1,6-alpha-linkage to the limit dextrin main chain, generating a debranched limit dextrin. The protein is Glycogen debranching enzyme of Escherichia coli O17:K52:H18 (strain UMN026 / ExPEC).